A 319-amino-acid chain; its full sequence is MISEKILRHIFQYRRLLSDTEPCAKEPCSICLAPHLPKIQSFIENNEPIHFILPAFPAKSPNPQKVLGPMPDMGERVALQFLQNLCNQISEIYASGAKITICSDGRVFTDLVAITDENVSLYRQGIQRLLNEINADAIDTFCLENVFTGMSFDQMRKTLVKQYAQPIESIQERVNSEDKHRQFFKGIYHLLFDDYLVLYPDKSREQIEVECNLRAYEVIQRSNAWTTLVGQHFPQSLRLSIHPQDYHSNKIGIHMIKTSDQWGTPWHNAPMFNGKEFLLMKRKHIEDIGASLVWHNDHPSHYILSEQVSQALVTLDNKS.

It belongs to the isocyanide synthase family.

It carries out the reaction D-ribulose 5-phosphate + L-tryptophan = (2S)-3-(1H-indol-3-yl)-2-isocyanopropanoate + hydroxyacetone + formaldehyde + phosphate + H2O + H(+). Involved in the biosynthesis of ambiguines, a family of hapalindole-type alkaloids. Responsible for the synthesis of the isonitrile group on tryptophan using ribulose 5-phosphate as the source of the carbon atom. This is L-tryptophan isonitrile synthase AmbI1 from Fischerella ambigua (strain UTEX 1903).